Consider the following 255-residue polypeptide: 5-oxoprolinase subunit A (255 aa).

It belongs to the LamB/PxpA family. As to quaternary structure, forms a complex composed of PxpA, PxpB and PxpC.

It catalyses the reaction 5-oxo-L-proline + ATP + 2 H2O = L-glutamate + ADP + phosphate + H(+). Its function is as follows. Catalyzes the cleavage of 5-oxoproline to form L-glutamate coupled to the hydrolysis of ATP to ADP and inorganic phosphate. The protein is 5-oxoprolinase subunit A of Clostridium kluyveri (strain ATCC 8527 / DSM 555 / NBRC 12016 / NCIMB 10680 / K1).